Consider the following 166-residue polypeptide: Bacterial non-heme ferritin (166 aa).

One can recognise a Ferritin-like diiron domain in the interval leucine 2–glycine 145. Fe cation contacts are provided by glutamate 17, glutamate 50, histidine 53, glutamate 94, and glutamine 127.

This sequence belongs to the ferritin family. Prokaryotic subfamily.

Its subcellular location is the cytoplasm. It catalyses the reaction 4 Fe(2+) + O2 + 6 H2O = 4 iron(III) oxide-hydroxide + 12 H(+). Functionally, iron-storage protein. The sequence is that of Bacterial non-heme ferritin (ftnA) from Staphylococcus aureus (strain USA300).